Consider the following 34-residue polypeptide: Cytochrome b6-f complex subunit 7 (34 aa).

A helical membrane pass occupies residues Ala-9–Leu-27.

It belongs to the PetM family. In terms of assembly, the 4 large subunits of the cytochrome b6-f complex are cytochrome b6, subunit IV (17 kDa polypeptide, PetD), cytochrome f and the Rieske protein, while the 4 small subunits are PetG, PetL, PetM and PetN. The complex functions as a dimer.

It localises to the cellular thylakoid membrane. In terms of biological role, component of the cytochrome b6-f complex, which mediates electron transfer between photosystem II (PSII) and photosystem I (PSI), cyclic electron flow around PSI, and state transitions. In Nostoc punctiforme (strain ATCC 29133 / PCC 73102), this protein is Cytochrome b6-f complex subunit 7.